The following is a 255-amino-acid chain: 4-diphosphocytidyl-2-C-methyl-D-erythritol kinase (255 aa).

Residue lysine 6 is part of the active site. 95–105 (PVCAGLGGGSS) contacts ATP. Aspartate 137 is a catalytic residue.

This sequence belongs to the GHMP kinase family. IspE subfamily.

The enzyme catalyses 4-CDP-2-C-methyl-D-erythritol + ATP = 4-CDP-2-C-methyl-D-erythritol 2-phosphate + ADP + H(+). It participates in isoprenoid biosynthesis; isopentenyl diphosphate biosynthesis via DXP pathway; isopentenyl diphosphate from 1-deoxy-D-xylulose 5-phosphate: step 3/6. Functionally, catalyzes the phosphorylation of the position 2 hydroxy group of 4-diphosphocytidyl-2C-methyl-D-erythritol. This chain is 4-diphosphocytidyl-2-C-methyl-D-erythritol kinase, found in Campylobacter jejuni subsp. jejuni serotype O:2 (strain ATCC 700819 / NCTC 11168).